The primary structure comprises 1390 residues: MKAPAVLAPGILVLLFTLVQRSNGECKEALAKSEMNVNMKYQLPNFTAETLIQNVILHEHHIFLGATNYIYVLNEEDLQKVAEYKTGPVLEHPDCFPCQDCSSKANLSGGVWKDNINMALVVDTYYDDQLISCGSVNRGTCQRHVFPHNHTADIQSEVHCIFSPQIEEPSQCPDCVVSALGAKVLSSVKDRFINFFVGNTINSSYFPDHPLHSISVRRLKETKDGFMFLTDQSYIDVLPEFRDSYPIKYVHAFESNNFIYFLTVQRETLDAQTFHTRIIRFCSINSGLHSYMEMPLECILTEKRKKRSTKKEVFNILQAAYVSKPGAQLARQIGASLNDDILFGVFAQSKPDSAEPMDRSAMCAFPIKYVNDFFNKIVNKNNVRCLQHFYGPNHEHCFNRTLLRNSSGCEARRDEYRTEFTTALQRVDLFMGQFSEVLLTSISTFIKGDLTIANLGTSEGRFMQVVVSRSGPSTPHVNFLLDSHPVSPEVIVEHPLNQNGYTLVVTGKKITKIPLNGLGCRHFQSCSQCLSAPPFVQCGWCHDKCVRSEECSSGTWTQQICLPAIYKVFPSSAPLEGGTRLTICGWDFGFRRNNKFDLKKTRVLLGNESCTLTLSESTMNILKCTVGPAMNKHFNMSIIISNGHGTTQYSTFSYVDPVITGISPKYGPMAGGTLLTLTGNYLNSGNSRHISIGGKTCTLKSVSNSILECYTPAQTISTEFAVKLKIDLANRETSIFSYREDPIVYEIHPTKSFISGGSTITGVGKNLNSVSVPRMVINVHEAGRNFTVACQHRSNSEIICCTTPSLQQLNLQLPLKTKAFFMLDGILSKYFDLIYVHNPVFKPFEKPVMISMGNENVLEIKGNDIDPEAVKGEVLKVGNKSCENIHLHSEAVLCTVPNDLLKLNSELNIEWKQAISSTVLGKVIVQPDQNFTGLIAGVVSISIALLLLLGFFLWLKKRKQIKDLGSELVRYDARVHTPHLDRLVSARSVSPTTEMVSNESVDYRATFPEDQFPNSSQNGSCRQVQYPLTDMSPILTSGDSDISSPLLQNTVHIDLSALNPELVQAVQHVVIGPSSLIVHFNEVIGRGHFGCVYHGTLLDNDGKKIHCAVKSLNRITDIGEVSQFLTEGIIMKDFSHPNVLSLLGICLRSEGSPLVVLPYMKHGDLRNFIRNETHNPTVKDLIGFGLQVAKGMKYLASKKFVHRDLAARNCMLDEKFTVKVADFGLARDMYDKEYYSVHNKTGAKLPVKWMALESLQTQKFTTKSDVWSFGVLLWELMTRGAPPYPDVNTFDITVYLLQGRRLLQPEYCPDPLYEVMLKCWHPKAEMRPSFSELVSRISAIFSTFIGEHYVHVNATYVNVKCVAPYPSLLSSEDNADDEVDTRPASFWETS.

The first 24 residues, 1–24 (MKAPAVLAPGILVLLFTLVQRSNG), serve as a signal peptide directing secretion. Over 25 to 932 (ECKEALAKSE…VIVQPDQNFT (908 aa)) the chain is Extracellular. One can recognise a Sema domain in the interval 27-515 (KEALAKSEMN…TGKKITKIPL (489 aa)). N-linked (GlcNAc...) asparagine glycosylation occurs at asparagine 45. Cystine bridges form between cysteine 95/cysteine 101, cysteine 98/cysteine 160, cysteine 133/cysteine 141, and cysteine 172/cysteine 175. Asparagine 106 carries an N-linked (GlcNAc...) asparagine glycan. Residue asparagine 149 is glycosylated (N-linked (GlcNAc...) asparagine). N-linked (GlcNAc...) asparagine glycosylation is present at asparagine 202. Cystine bridges form between cysteine 298–cysteine 363 and cysteine 385–cysteine 397. Residues asparagine 399 and asparagine 405 are each glycosylated (N-linked (GlcNAc...) asparagine). 4 disulfide bridges follow: cysteine 520/cysteine 538, cysteine 526/cysteine 561, cysteine 529/cysteine 545, and cysteine 541/cysteine 551. IPT/TIG domains are found at residues 563–655 (PAIY…FSYV), 657–739 (PVIT…FSYR), and 742–836 (PIVY…LIYV). Threonine 582 carries an O-linked (Man) threonine glycan. N-linked (GlcNAc...) asparagine glycans are attached at residues asparagine 607 and asparagine 635. O-linked (Man) threonine glycosylation is found at threonine 676 and threonine 761. 3 N-linked (GlcNAc...) asparagine glycosylation sites follow: asparagine 785, asparagine 879, and asparagine 930. Residues 933–955 (GLIAGVVSISIALLLLLGFFLWL) form a helical membrane-spanning segment. Over 956 to 1390 (KKRKQIKDLG…TRPASFWETS (435 aa)) the chain is Cytoplasmic. The residue at position 966 (serine 966) is a Phosphoserine. The residue at position 977 (threonine 977) is a Phosphothreonine. A phosphoserine mark is found at serine 990, serine 997, and serine 1000. Residue tyrosine 1003 is modified to Phosphotyrosine. In terms of domain architecture, Protein kinase spans 1078–1345 (VHFNEVIGRG…RISAIFSTFI (268 aa)). ATP-binding positions include 1084-1092 (IGRGHFGCV) and lysine 1110. Aspartate 1204 (proton acceptor) is an active-site residue. The tract at residues 1212–1390 (LDEKFTVKVA…TRPASFWETS (179 aa)) is interaction with RANBP9. Tyrosine 1230 carries the phosphotyrosine modification. Phosphotyrosine; by autocatalysis occurs at positions 1234 and 1235. Phosphothreonine is present on threonine 1289. The tract at residues 1320-1359 (WHPKAEMRPSFSELVSRISAIFSTFIGEHYVHVNATYVNV) is interaction with MUC20. Phosphotyrosine; by autocatalysis is present on residues tyrosine 1349 and tyrosine 1356. Tyrosine 1365 is subject to Phosphotyrosine.

Belongs to the protein kinase superfamily. Tyr protein kinase family. Heterodimer made of an alpha chain (50 kDa) and a beta chain (145 kDa) which are disulfide linked. Binds PLXNB1. Interacts when phosphorylated with downstream effectors including STAT3, PIK3R1, SRC, PCLG1, GRB2 and GAB1. Interacts with SPSB1, SPSB2 and SPSB4. Interacts with INPP5D/SHIP1. When phosphorylated at Tyr-1356, interacts with INPPL1/SHIP2. Interacts with RANBP9 and RANBP10, as well as SPSB1, SPSB2, SPSB3 and SPSB4. SPSB1 binding occurs in the presence and in the absence of HGF, however HGF treatment has a positive effect on this interaction. Interacts with MUC20; prevents interaction with GRB2 and suppresses hepatocyte growth factor-induced cell proliferation. Interacts with GRB10. Interacts with PTPN1 and PTPN2. Interacts with HSP90AA1 and HSP90AB1; the interaction suppresses MET kinase activity. Interacts with tensin TNS3. Interacts (when phosphorylated) with tensin TNS4 (via SH2 domain); the interaction increases MET protein stability by inhibiting MET endocytosis and subsequent lysosomal degradation. Post-translationally, autophosphorylated in response to ligand binding on Tyr-1234 and Tyr-1235 in the kinase domain leading to further phosphorylation of Tyr-1349 and Tyr-1356 in the C-terminal multifunctional docking site. Dephosphorylated by PTPRJ at Tyr-1349 and Tyr-1365. Dephosphorylated by PTPN1 and PTPN2. Ubiquitinated. Ubiquitination by CBL regulates the receptor stability and activity through proteasomal degradation. In terms of processing, O-mannosylation of IPT/TIG domains by TMEM260 is required for protein maturation. O-mannosylated residues are composed of single mannose glycans that are not elongated or modified.

The protein localises to the membrane. It catalyses the reaction L-tyrosyl-[protein] + ATP = O-phospho-L-tyrosyl-[protein] + ADP + H(+). In its inactive state, the C-terminal tail interacts with the catalytic domain and inhibits the kinase activity. Upon ligand binding, the C-terminal tail is displaced and becomes phosphorylated, thus increasing the kinase activity. Its function is as follows. Receptor tyrosine kinase that transduces signals from the extracellular matrix into the cytoplasm by binding to hepatocyte growth factor/HGF ligand. Regulates many physiological processes including proliferation, scattering, morphogenesis and survival. Ligand binding at the cell surface induces autophosphorylation of MET on its intracellular domain that provides docking sites for downstream signaling molecules. Following activation by ligand, interacts with the PI3-kinase subunit PIK3R1, PLCG1, SRC, GRB2, STAT3 or the adapter GAB1. Recruitment of these downstream effectors by MET leads to the activation of several signaling cascades including the RAS-ERK, PI3 kinase-AKT, or PLCgamma-PKC. The RAS-ERK activation is associated with the morphogenetic effects while PI3K/AKT coordinates prosurvival effects. During embryonic development, MET signaling plays a role in gastrulation, development and migration of muscles and neuronal precursors, angiogenesis and kidney formation. In adults, participates in wound healing as well as organ regeneration and tissue remodeling. Also promotes differentiation and proliferation of hematopoietic cells. The polypeptide is Hepatocyte growth factor receptor (MET) (Pongo abelii (Sumatran orangutan)).